The sequence spans 33 residues: Helofensin-1 (33 aa).

This sequence belongs to the beta-defensin family. Helofensin subfamily. In terms of tissue distribution, expressed by the venom gland.

Its subcellular location is the secreted. Functionally, lethal toxin which possesses an inhibitory effect on direct electrical stimulation of the isolated hemi-diaphragm. Neither hemorrhagic nor hemolytic activities are detected. Phospholipase A2 activity, proteolytic activity and arginine esterolytic activity are absent. This Heloderma horridum horridum (Mexican beaded lizard) protein is Helofensin-1.